A 179-amino-acid chain; its full sequence is Ubiquitin-conjugating enzyme E2 C (179 aa).

The disordered stretch occupies residues 1–31; the sequence is MASQNVDPAAASSVASRKGQESGTSAARGSV. Residues 30-179 enclose the UBC core domain; that stretch reads SVGKRLQQEL…YQKQVREKEI (150 aa). The active-site Glycyl thioester intermediate is cysteine 114.

It belongs to the ubiquitin-conjugating enzyme family. As to quaternary structure, component of the APC/C complex. Post-translationally, autoubiquitinated by the APC/C complex, leading to its degradation by the proteasome.

It carries out the reaction S-ubiquitinyl-[E1 ubiquitin-activating enzyme]-L-cysteine + [E2 ubiquitin-conjugating enzyme]-L-cysteine = [E1 ubiquitin-activating enzyme]-L-cysteine + S-ubiquitinyl-[E2 ubiquitin-conjugating enzyme]-L-cysteine.. It catalyses the reaction S-ubiquitinyl-[E1 ubiquitin-activating enzyme]-L-cysteine + [acceptor protein]-L-lysine = [E1 ubiquitin-activating enzyme]-L-cysteine + N(6)-monoubiquitinyl-[acceptor protein]-L-lysine.. Its pathway is protein modification; protein ubiquitination. Catalyzes the covalent attachment of ubiquitin to other proteins. Acts as an essential factor of the anaphase promoting complex/cyclosome (APC/C), a cell cycle-regulated ubiquitin ligase that controls progression through mitosis. Acts by initiating 'Lys-11'-linked polyubiquitin chains on APC/C substrates, leading to the degradation of APC/C substrates by the proteasome and promoting mitotic exit. This Xenopus laevis (African clawed frog) protein is Ubiquitin-conjugating enzyme E2 C (ube2c).